The following is a 204-amino-acid chain: High frequency lysogenization protein HflD homolog (204 aa).

The protein belongs to the HflD family.

It localises to the cytoplasm. The protein resides in the cell inner membrane. This Stenotrophomonas maltophilia (strain R551-3) protein is High frequency lysogenization protein HflD homolog.